Consider the following 561-residue polypeptide: Cloacin (561 aa).

3 stretches are compositionally biased toward gly residues: residues 1-21 (MSGG…GGQA), 29-40 (SGKGGPSSGGGT), and 66-91 (FGNG…GGGQ). 5 disordered regions span residues 1 to 93 (MSGG…GQSS), 254 to 273 (PKGI…TAGG), 304 to 326 (VKQR…PEEG), 432 to 507 (KAAL…KRAR), and 530 to 561 (RASD…KKYL). The tract at residues 1-180 (MSGGDGRGPG…DTVTETPAST (180 aa)) is involved in the translocation of the protein across the cell membrane. Residues 200 to 420 (DERQHIAVVA…NAKLKAAQAS (221 aa)) form a responsible for the receptor binding activity region. Basic and acidic residues-rich tracts occupy residues 306–326 (QRQE…PEEG) and 440–494 (ESRK…EGKP). The interval 421-561 (LNAMNDALSR…DPKRNIKKYL (141 aa)) is ribonuclease activity. The tract at residues 540–561 (FDPKTGKQVKGPDPKRNIKKYL) is binding of immunity protein.

It belongs to the cloacin colicin family.

Inactivates ribosomes by hydrolyzing 16S RNA in 30S ribosomes at a specific site. In terms of biological role, colicins are polypeptide toxins produced by and active against E.coli and closely related bacteria. The protein is Cloacin (ccl) of Escherichia coli.